The chain runs to 492 residues: Probable cobyric acid synthase (492 aa).

Residues 252–444 (PIEVNIVKFS…FHGILENFEF (193 aa)) form the GATase cobBQ-type domain. C330 acts as the Nucleophile in catalysis. The active site involves H436.

It belongs to the CobB/CobQ family. CobQ subfamily.

It functions in the pathway cofactor biosynthesis; adenosylcobalamin biosynthesis. Functionally, catalyzes amidations at positions B, D, E, and G on adenosylcobyrinic A,C-diamide. NH(2) groups are provided by glutamine, and one molecule of ATP is hydrogenolyzed for each amidation. The chain is Probable cobyric acid synthase from Methanococcus maripaludis (strain C6 / ATCC BAA-1332).